Consider the following 334-residue polypeptide: GTPase Obg (334 aa).

The 159-residue stretch at 4–162 (FDFIDEVKKY…GWIKLELKLL (159 aa)) folds into the Obg domain. One can recognise an OBG-type G domain in the interval 163-330 (AEVGLVGFPN…FKDKIWKLLH (168 aa)). GTP-binding positions include 169–176 (GFPNAGKS), 194–198 (FTTLV), 216–219 (DMPG), 284–287 (SKLD), and 311–313 (SSV). Serine 176 and threonine 196 together coordinate Mg(2+).

It belongs to the TRAFAC class OBG-HflX-like GTPase superfamily. OBG GTPase family. In terms of assembly, monomer. Requires Mg(2+) as cofactor.

It is found in the cytoplasm. An essential GTPase which binds GTP, GDP and possibly (p)ppGpp with moderate affinity, with high nucleotide exchange rates and a fairly low GTP hydrolysis rate. Plays a role in control of the cell cycle, stress response, ribosome biogenesis and in those bacteria that undergo differentiation, in morphogenesis control. This Amoebophilus asiaticus (strain 5a2) protein is GTPase Obg.